Reading from the N-terminus, the 458-residue chain is Argininosuccinate lyase (458 aa).

This sequence belongs to the lyase 1 family. Argininosuccinate lyase subfamily.

It is found in the cytoplasm. The enzyme catalyses 2-(N(omega)-L-arginino)succinate = fumarate + L-arginine. The protein operates within amino-acid biosynthesis; L-arginine biosynthesis; L-arginine from L-ornithine and carbamoyl phosphate: step 3/3. This is Argininosuccinate lyase from Haemophilus ducreyi (strain 35000HP / ATCC 700724).